The primary structure comprises 525 residues: Calcium uptake protein 1 homolog, mitochondrial (525 aa).

Residues 109–146 (ADAGQRPSSAADVNGEDKSSESESEDSEDEEAGSDLHL) are disordered. Residues 130 to 141 (SESEDSEDEEAG) show a composition bias toward acidic residues. EF-hand domains are found at residues 268-303 (ISRR…VRQQ) and 459-494 (LSDH…RVQR). The Ca(2+) site is built by Asp281, Asn283, Asp285, Asp287, Glu292, Asp472, Asn474, Asp476, Gln478, and Glu483.

The protein belongs to the MICU1 family. MICU1 subfamily.

Its subcellular location is the mitochondrion intermembrane space. The protein resides in the mitochondrion inner membrane. Its function is as follows. Calcium sensor of the mitochondrial calcium uniporter (MCU) channel, which senses calcium level via its EF-hand domains. At low calcium levels, MICU1 occludes the pore of the MCU channel, preventing mitochondrial calcium uptake. At higher calcium levels, calcium-binding to MICU1 induces a conformational change that weakens MCU-MICU1 interactions and moves MICU1 away from the pore, allowing calcium permeation through the MCU channel. Also required to protect against manganese toxicity by preventing manganese uptake by MCU. During development, required in alpha/beta or gamma mushroom body neurons to support olfactory intermediate-term memory in the adult. The chain is Calcium uptake protein 1 homolog, mitochondrial from Drosophila melanogaster (Fruit fly).